The following is a 456-amino-acid chain: MKTWPSRAVSLLLLALALPVGCSEPPPPVRDPDTLATIRERGELVVLTLAGPTSLIENEDGPPSGYEVDLANAFAASLGVTARFEVAASLPDLFDALAAGDGHVAAAGLTLTPERSERLAFSPVYKSVTEQLVCRRGGVNPTRLERLPDADIVVLEGSSYEETLRAIGVTHTALRWRTRPGGSAMPLLEAVDDGQADCTIADSHLADFARRRHPELIVARNLTGEQPLAWAYDARIDGLGEALSAWFATAHADGLLEALDETWFGRFGDYDYVDVARFVRRVENRLPRYRRLFEAAADELPFEWELLAAQAYQESHWDPDAVSATGVRGLMMLTLSTAERVGIDDRTDPEQSIVGGAAYLDDLYERVPDSVTGPDRLWFALAAYNVGMGHMYDARRLAERLGRDKDSWDDLAEILPLLSDPAHYSTLRYGYARGHEPVRYVAKIREYRALLAAQDL.

The signal sequence occupies residues 1-22; that stretch reads MKTWPSRAVSLLLLALALPVGC. Residues 23–267 form a non-LT domain region; the sequence is SEPPPPVRDP…ALDETWFGRF (245 aa). The segment at 268–456 is LT domain; that stretch reads GDYDYVDVAR…YRALLAAQDL (189 aa). The active site involves glutamate 314.

It in the N-terminal section; belongs to the bacterial solute-binding protein 3 family. The protein in the C-terminal section; belongs to the transglycosylase Slt family.

The protein resides in the cell outer membrane. The catalysed reaction is Exolytic cleavage of the (1-&gt;4)-beta-glycosidic linkage between N-acetylmuramic acid (MurNAc) and N-acetylglucosamine (GlcNAc) residues in peptidoglycan, from either the reducing or the non-reducing ends of the peptidoglycan chains, with concomitant formation of a 1,6-anhydrobond in the MurNAc residue.. Functionally, murein-degrading enzyme that degrades murein glycan strands and insoluble, high-molecular weight murein sacculi, with the concomitant formation of a 1,6-anhydromuramoyl product. Lytic transglycosylases (LTs) play an integral role in the metabolism of the peptidoglycan (PG) sacculus. Their lytic action creates space within the PG sacculus to allow for its expansion as well as for the insertion of various structures such as secretion systems and flagella. The chain is Membrane-bound lytic murein transglycosylase F from Maricaulis maris (strain MCS10) (Caulobacter maris).